The following is a 99-amino-acid chain: SAGA-associated factor 11 (99 aa).

The SGF11-type zinc finger occupies 71–92 (FYCENCGREVSGNRFAAHLQRC).

It belongs to the SGF11 family. In terms of assembly, component of the 1.8 MDa SAGA transcription coactivator-HAT complex. SAGA is built of 5 distinct domains with specialized functions. Within the SAGA complex, SUS1, SGF11, SGF73 and UBP8 form an additional subcomplex of SAGA called the DUB module (deubiquitination module). Interacts directly with SGF73, SUS1 and UBP8.

The protein localises to the nucleus. Functions as a component of the transcription regulatory histone acetylation (HAT) complex SAGA. At the promoters, SAGA is required for recruitment of the basal transcription machinery. It influences RNA polymerase II transcriptional activity through different activities such as TBP interaction and promoter selectivity, interaction with transcription activators, and chromatin modification through histone acetylation and deubiquitination. SAGA acetylates nucleosomal histone H3 to some extent (to form H3K9ac, H3K14ac, H3K18ac and H3K23ac). SAGA interacts with DNA via upstream activating sequences (UASs). Involved in transcriptional regulation of a subset of SAGA-regulated genes. Within the SAGA complex, participates in a subcomplex, that specifically deubiquitinates histones H2B. This Candida glabrata (strain ATCC 2001 / BCRC 20586 / JCM 3761 / NBRC 0622 / NRRL Y-65 / CBS 138) (Yeast) protein is SAGA-associated factor 11.